Here is a 617-residue protein sequence, read N- to C-terminus: MKITSLHFLIFHKNLNYVSSKVKAKKIFYQRALNNIYLCTIRTMIVDIAEIKKRDNHALDTQESQELVNKIKEIKNSDEQNNSNNNNNNSSSSNFCSNNNSPFSHKETKLMVKEEVPNSIVKNILNNNSCATSIINNKFYTQINNIIPVKPEAMKEENINVSTVNTENDISKEKKENSHYFCDEIKVMKKEYSKDDFVTDVKLEMNDKEEEEEEKQKIGQESTHINIKVEKDTFNECNNSNVNEKKRNRSVDIHNELSNKRILTEDVVVKCNIKNDVKIIVTWNMNSITVRYKNKKKWDEFMNFFNNLNADVLCFQEVRLPAMNLSEPCDNKNKNKNKNDGIRDRGKIKNSDQKSLADYEIMEQILNDDFKDYNAYFSLANIKYSGQLVLVKKNIHIESIRYNLFFENNAHIHHDEGRVILVEFSNFFLLSTYTPNNGFDHVKFERRRLFDEQLQKFVTILRNEKQKPLVWTGDLNIAPEDIDLSHPAEFRRMKKGNVPKEFIGQPGCTDFERKNFQKILTAGNLVDSYRYLQNIKLNEDKKNNIKHTPNINDNIYTWRCPFLLGKSCNKAMRIDHFIVSKEFLNRINKIHIQGFSVFHNNFYGSDHCPVILYLKNE.

The disordered stretch occupies residues 74 to 99 (IKNSDEQNNSNNNNNNSSSSNFCSNN). A compositionally biased stretch (low complexity) spans 81–99 (NNSNNNNNNSSSSNFCSNN). Asn284 and Glu317 together coordinate Mg(2+). The segment at 326–349 (SEPCDNKNKNKNKNDGIRDRGKIK) is disordered. The segment covering 329 to 349 (CDNKNKNKNKNDGIRDRGKIK) has biased composition (basic and acidic residues). Mg(2+)-binding residues include Asp474, Asn476, Asp606, and His607. Catalysis depends on His607, which acts as the Proton acceptor.

Belongs to the DNA repair enzymes AP/ExoA family. The cofactor is Mg(2+). Mn(2+) is required as a cofactor. May be proteolytically cleaved into a 64 kDa form.

It is found in the mitochondrion. The enzyme catalyses Exonucleolytic cleavage in the 3'- to 5'-direction to yield nucleoside 5'-phosphates.. With respect to regulation, apurinic/apyrimidinic (AP) endonuclease activity is maximal at low Mg(2+) (0.5-2 mM) with no activity seen at high concentrations (more than 10 mM). 3'-5' exonuclease activity is maximal in the range of 0.5-2 mM Mg(2+) with activity seen up to 10 mM Mg(2+). Functionally, multifunctional protein that plays a central role in mitochondrial DNA base excision repair (BER) pathway induced by oxidative stress. Has apurinic/apyrimidinic (AP) endonuclease activity towards double-stranded DNA (dsDNA). Has nucleotide incision repair (NIR) activity; acts on dsDNA with oxidized bases thymine glycol and 5,6-dihydro-2'-deoxyuridine. Has 3'-5' exonuclease; can use dsDNA templates with 3'-OH termini including blunt-end, gapped and mismatched 3'-recessed. Has 3'-phosphatase activity; cleaves 3'-phosphate from blunt, recessed and gapped dsDNA templates, followed by 3'-5' exonuclease activity. Has RNase H-like activity; cleaves RNA on 3'-recessed RNA-DNA duplex. Plays a role in merosome infection of host erythrocytes. The sequence is that of DNA-(apurinic or apyrimidinic site) endonuclease from Plasmodium falciparum (isolate 3D7).